Consider the following 411-residue polypeptide: Na(+)-translocating NADH-quinone reductase subunit B (411 aa).

3 helical membrane passes run 56 to 76 (MMIT…YNVG), 120 to 140 (ALGA…CTIW), and 166 to 186 (IVPP…GIIV). Position 233 is an FMN phosphoryl threonine (Thr233). The next 5 helical transmembrane spans lie at 272 to 292 (VSTL…IAAW), 294 to 314 (IIAG…LIGS), 319 to 339 (MFSM…GMVF), 348 to 368 (SFTN…AVLI), and 378 to 398 (GMML…YIVV).

Belongs to the NqrB/RnfD family. In terms of assembly, composed of six subunits; NqrA, NqrB, NqrC, NqrD, NqrE and NqrF. FMN serves as cofactor.

The protein resides in the cell inner membrane. The catalysed reaction is a ubiquinone + n Na(+)(in) + NADH + H(+) = a ubiquinol + n Na(+)(out) + NAD(+). In terms of biological role, NQR complex catalyzes the reduction of ubiquinone-1 to ubiquinol by two successive reactions, coupled with the transport of Na(+) ions from the cytoplasm to the periplasm. NqrA to NqrE are probably involved in the second step, the conversion of ubisemiquinone to ubiquinol. This is Na(+)-translocating NADH-quinone reductase subunit B from Haemophilus influenzae (strain 86-028NP).